We begin with the raw amino-acid sequence, 831 residues long: MTQNWRPQSRLQTMTFAGTARPMTSMTAAGFTKNPLATAGVASIFDKLPPEPPKDSPEQKADQMEINIFKLLRDGMSAASCKDYVTALGRIREAIKLEQKVSQHRTMNGLADSINLDLRTCIWMHWAQIQALGGQPEMALSTYEKIVKTAEGATLAQIRFNMGNINHNLGKYNEALKNFRMAIDQASPSLPRFRQKIASHMAQSCIKLHRWQDAVDRIEEYLIKQYTLASSVGTDVERQNFYAMTTRFDPLYTVLIGYYALGVPEKMIDAYSRLIDSSILISDHPDSLEIDDHHNGISSKQIAMADAELCNMSNDDELDDLSRYNATLRHEHTNKLLISARLLAPAIAWEESQGYAKLSDILREKGHHGISLQVQMSMALTLLKRNEFEKATDIMLRIDREGLESALALGINVPLSILQKTRNLSLTAAATAVTNQESDLHLLGIDPSVLANQQSVVDRDAVASRGAPEVDMLKTDDDNGTKKQPYAAFVPRGVHTNIAFIYYLKGDYEASARHAQIALEIDPYDSFAHINLGCTYSKTNQWELSLREFLKAQEINMESVQATYNAGLVYFKQQEYKTAYSCFQKVASKLPSYGDAIYMSADCLARMSQIDEAIQMLSNLVTMFSAVKAYDPSIYIRLGELYSIAGDEGQAAHYFKEAHRLVPFSLAVINWLGSHYIKNELYEQARVCFEKASRVDTTTPKWSLAVAACLRKSKQYRDAIYEYKHILKRFPTNTTAMTHLISSLNNIGQHKEADEWAEKLTKLTNNKVPEVTEDRELDEFVKQERRNSVAAVGPGSRAGQDRFEASNNRVSSNTGDLFGDVDIAEELLTEN.

TPR repeat units follow at residues 68–101 (IFKL…EQKV), 120–153 (TCIW…AEGA), 156–189 (AQIR…ASPS), 248–281 (FDPL…SILI), 492–525 (RGVH…DPYD), 526–559 (SFAH…NMES), 560–593 (VQAT…LPSY), 595–627 (DAIY…FSAV), 632–665 (PSIY…VPFS), 666–699 (LAVI…DTTT), and 700–733 (PKWS…FPTN). Positions 785-816 (RRNSVAAVGPGSRAGQDRFEASNNRVSSNTGD) are disordered. Positions 805–815 (ASNNRVSSNTG) are enriched in polar residues.

The protein localises to the cell projection. It is found in the cilium. It localises to the flagellum. Its subcellular location is the cytoplasm. The protein resides in the cytoskeleton. The protein localises to the flagellum axoneme. It is found in the flagellum basal body. Component of the intraflagellar transport complex B (IFT-B) involved in flagellar assembly. This is Intraflagellar transport protein 88 from Giardia intestinalis (strain ATCC 50803 / WB clone C6) (Giardia lamblia).